We begin with the raw amino-acid sequence, 538 residues long: Hydroxylamine reductase (538 aa).

[4Fe-4S] cluster is bound by residues Cys3, Cys6, Cys15, and Cys21. His239, Glu263, Cys307, Cys394, Cys422, Cys447, Glu481, and Lys483 together coordinate hybrid [4Fe-2O-2S] cluster. Cys394 is modified (cysteine persulfide).

Belongs to the HCP family. It depends on [4Fe-4S] cluster as a cofactor. Hybrid [4Fe-2O-2S] cluster serves as cofactor.

It localises to the cytoplasm. It catalyses the reaction A + NH4(+) + H2O = hydroxylamine + AH2 + H(+). Its function is as follows. Catalyzes the reduction of hydroxylamine to form NH(3) and H(2)O. The chain is Hydroxylamine reductase from Solidesulfovibrio magneticus (strain ATCC 700980 / DSM 13731 / RS-1) (Desulfovibrio magneticus).